Consider the following 858-residue polypeptide: Leucine--tRNA ligase (858 aa).

The short motif at 42-52 (PYPSGRLHMGH) is the 'HIGH' region element. The 'KMSKS' region signature appears at 618–622 (KMSKS). Lys621 contributes to the ATP binding site.

This sequence belongs to the class-I aminoacyl-tRNA synthetase family.

The protein resides in the cytoplasm. It catalyses the reaction tRNA(Leu) + L-leucine + ATP = L-leucyl-tRNA(Leu) + AMP + diphosphate. In Aliivibrio fischeri (strain MJ11) (Vibrio fischeri), this protein is Leucine--tRNA ligase.